We begin with the raw amino-acid sequence, 151 residues long: uncharacterized protein (151 aa).

The interval 122–151 (GVAQRQVPTTGTHSFFHCTSEGNKEKPHHF) is disordered.

This is an uncharacterized protein from Homo sapiens (Human).